The sequence spans 423 residues: MLRVRCLRGGSRGAEAVHYIGSRLGRTLTGWVQRTFQSTQAATASSRNSSAADDKATEPLPKDCPVSSYNEWDPLEEVIVGRAENACVPPFTIEVKANTNEKYWPFYQKHGGHYFPKDHLKKAVAEIEEMCNILKMEGVTVRRPDPIDWSLKYKTPDFESTGLYSAMPRDILIVVGNEIIEAPMAWRSRFFEYRAYRSIIKDYFHRGAKWTTAPKPTMADELYNQDYPIHSIEDRHKLAAQGKFVTTEFEPCFDAADFIRAGRDIFAQRSQVTNYLGIEWMRRHLAPDYRVHIISFKDPNPMHIDATFNIIGPGIVLSNPDRPCHQIDLFKKAGWTIITPPTPIIPDDHPLWMSSKWLSMNVLMLDEKRVMVDANEVPIQKMFEKLGITTIKVNIRNANSLGGGFHCWTCDVRRRGTLQSYLD.

Residues 1-48 constitute a mitochondrion transit peptide; the sequence is MLRVRCLRGGSRGAEAVHYIGSRLGRTLTGWVQRTFQSTQAATASSRN. Residues 39-51 are compositionally biased toward low complexity; the sequence is TQAATASSRNSSA. The interval 39–65 is disordered; that stretch reads TQAATASSRNSSAADDKATEPLPKDCP. Residues Ser46 and Ser49 each carry the phosphoserine modification. The span at 52 to 61 shows a compositional bias: basic and acidic residues; the sequence is ADDKATEPLP. Asp170 lines the arginine pocket. Residues Asp254 and His303 contribute to the active site. Residues Asp305, Arg322, Ser354, and Ser355 each contribute to the arginine site. N6-acetyllysine is present on Lys385. Cys407 serves as the catalytic Amidino-cysteine intermediate.

The protein belongs to the amidinotransferase family. Homodimer.

It is found in the mitochondrion inner membrane. The enzyme catalyses L-arginine + glycine = guanidinoacetate + L-ornithine. The catalysed reaction is 4-aminobutanoate + L-arginine = 4-guanidinobutanoate + L-ornithine. It carries out the reaction beta-alanine + L-arginine = 3-guanidinopropanoate + L-ornithine. It catalyses the reaction taurine + L-arginine = taurocyamine + L-ornithine. It functions in the pathway amine and polyamine biosynthesis; creatine biosynthesis; creatine from L-arginine and glycine: step 1/2. Transamidinase that catalyzes the transfer of the amidino group of L-arginine onto the amino moiety of acceptor metabolites such as glycine, beta-alanine, gamma-aminobutyric acid (GABA) and taurine yielding the corresponding guanidine derivatives. Catalyzes the rate-limiting step of creatine biosynthesis, namely the transfer of the amidino group from L-arginine to glycine to generate guanidinoacetate, which is then methylated by GAMT to form creatine. Provides creatine as a source for ATP generation in tissues with high energy demands, in particular skeletal muscle, heart and brain. The chain is Glycine amidinotransferase, mitochondrial (GATM) from Pongo abelii (Sumatran orangutan).